Consider the following 275-residue polypeptide: Ribosomal RNA small subunit methyltransferase A (275 aa).

The S-adenosyl-L-methionine site is built by asparagine 19, leucine 21, glycine 46, glutamate 71, aspartate 94, and asparagine 117.

Belongs to the class I-like SAM-binding methyltransferase superfamily. rRNA adenine N(6)-methyltransferase family. RsmA subfamily.

The protein resides in the cytoplasm. The catalysed reaction is adenosine(1518)/adenosine(1519) in 16S rRNA + 4 S-adenosyl-L-methionine = N(6)-dimethyladenosine(1518)/N(6)-dimethyladenosine(1519) in 16S rRNA + 4 S-adenosyl-L-homocysteine + 4 H(+). Specifically dimethylates two adjacent adenosines (A1518 and A1519) in the loop of a conserved hairpin near the 3'-end of 16S rRNA in the 30S particle. May play a critical role in biogenesis of 30S subunits. The sequence is that of Ribosomal RNA small subunit methyltransferase A from Burkholderia multivorans (strain ATCC 17616 / 249).